Reading from the N-terminus, the 567-residue chain is Hexose transporter HXT16 (567 aa).

The segment covering 1–19 (MASEQSSPEINADNLNSSA) has biased composition (polar residues). Residues 1 to 32 (MASEQSSPEINADNLNSSAADVHVQPPGEKEW) form a disordered region. Over 1 to 55 (MASEQSSPEINADNLNSSAADVHVQPPGEKEWSDGFYDKEVINGNTPDAPKRGFL) the chain is Cytoplasmic. A helical membrane pass occupies residues 56-76 (GYLIIYLLCYPVSFGGFLPGW). Residues 77–112 (DSGITAGFINMDNFKMNFGSYKHSTGEYYLSNVRMG) are Extracellular-facing. A helical transmembrane segment spans residues 113–133 (LLVAMFSVGCSIGGVAFARLA). At 134–139 (DTLGRR) the chain is on the cytoplasmic side. The helical transmembrane segment at 140-160 (LAIVIVVLVYMVGAIIQISSN) threads the bilayer. Topologically, residues 161–170 (HKWYQYFVGK) are extracellular. A helical membrane pass occupies residues 171–191 (IIYGLGAGGCSVLCPMLLSEI). Topologically, residues 192 to 197 (APTDLR) are cytoplasmic. Residues 198 to 218 (GGLVSLYQLNMTFGIFLGYCS) traverse the membrane as a helical segment. The Extracellular portion of the chain corresponds to 219 to 232 (VYGTRKYSNTAQWR). Residues 233–253 (IPVGLCFLWALIIIVGMLLVP) traverse the membrane as a helical segment. Residues 254 to 336 (ESPRYLIECE…VQTFLQLTGE (83 aa)) lie on the Cytoplasmic side of the membrane. Residues 337–353 (NYFFFYGTTIFKSVGLT) form a helical membrane-spanning segment. Residues 354-359 (DGFETS) lie on the Extracellular side of the membrane. The chain crosses the membrane as a helical span at residues 360–377 (IVLGTVNFFSTIIAVMVV). The Cytoplasmic segment spans residues 378–384 (DKIGRRK). A helical membrane pass occupies residues 385-405 (CLLFGAASMMACMVIFASIGV). Residues 406-427 (KCLYPHGQDGPSSKGAGNAMIV) are Extracellular-facing. The helical transmembrane segment at 428-448 (FTCFYIFCFATTWAPVAYIVV) threads the bilayer. The Cytoplasmic portion of the chain corresponds to 449–465 (AESFPSKVKSKAMSIST). Residues 466 to 486 (AFNWLWQFLIGFFTPFITGSI) form a helical membrane-spanning segment. His-487 is a topological domain (extracellular). Residues 488–508 (FYYGYVFVGCLVAMFLYVFFF) traverse the membrane as a helical segment. Residues 509 to 567 (LPETIGLSLEETQLLYEEGIKPWKSASWVPPSRRGASSRETEAKKKSWKEVLKFPKSFN) are Cytoplasmic-facing. The interval 533–555 (SASWVPPSRRGASSRETEAKKKS) is disordered. Basic and acidic residues predominate over residues 545-555 (SSRETEAKKKS).

It belongs to the major facilitator superfamily. Sugar transporter (TC 2.A.1.1) family.

The protein resides in the membrane. Probable glucose transporter. This is Hexose transporter HXT16 (HXT16) from Saccharomyces cerevisiae (strain ATCC 204508 / S288c) (Baker's yeast).